The chain runs to 492 residues: ATP synthase subunit beta, chloroplastic (492 aa).

Residue 170 to 177 (GGAGVGKT) participates in ATP binding.

It belongs to the ATPase alpha/beta chains family. In terms of assembly, F-type ATPases have 2 components, CF(1) - the catalytic core - and CF(0) - the membrane proton channel. CF(1) has five subunits: alpha(3), beta(3), gamma(1), delta(1), epsilon(1). CF(0) has four main subunits: a(1), b(1), b'(1) and c(9-12).

It localises to the plastid. It is found in the chloroplast thylakoid membrane. It catalyses the reaction ATP + H2O + 4 H(+)(in) = ADP + phosphate + 5 H(+)(out). Produces ATP from ADP in the presence of a proton gradient across the membrane. The catalytic sites are hosted primarily by the beta subunits. This is ATP synthase subunit beta, chloroplastic from Marchantia polymorpha (Common liverwort).